Reading from the N-terminus, the 412-residue chain is Putative phosphate permease PF1020 (412 aa).

10 consecutive transmembrane segments (helical) span residues 7–27 (MLADPILLITILLGFAMAWAI), 50–70 (AVIIAGVLEFMGAYFFGKTVT), 88–108 (VLIFGSIAALIGATIWLVIAT), 119–139 (SIIGGIVGYGIVYGGMSIVNW), 143–163 (IKVVLSWILSPIVGAIFAYLV), 187–207 (FWIGLAFVVIGTMFYIKVLHG), 213–233 (GFLKYGMPAGILTFIVVSLIL), 298–318 (WILALGGLGIAIGVATYGYKV), 335–355 (FTIDFSAATVVLIASWLGMPI), and 384–404 (DIIISWFVTVPAAGVIAGIIF).

Belongs to the inorganic phosphate transporter (PiT) (TC 2.A.20) family.

It localises to the cell membrane. In terms of biological role, potential transporter for phosphate. This chain is Putative phosphate permease PF1020, found in Pyrococcus furiosus (strain ATCC 43587 / DSM 3638 / JCM 8422 / Vc1).